The following is a 712-amino-acid chain: MSSAVLSPDRYINRELSWIAFNQRVLAQALDQRTPLLDQAKFSAIFSNNLDEFFMVRVASLKSQVEAGITTPSEDGKTPLEQLLTIRERLIPLLQQQQDHYRKQLRKKLLDHNVQLLDYSQLNKHQQQWVSDTFRHSVFPVLTPLAVDPAHPFPFVSNLSLNVAAVIHDPESGQRQFARVKVPQKNLPRFVSIPTELSESDPKPIHTAVPLEQVIAFNLDLLFPGMSVQGHYFFRVTRDADLELRDLEADDLMLALEQGLRKRRMGGEVVRLEVPNDMPEDVVEMLMNGLAVEEEDLYRIDGPLGLDDLFGLMALPLPKLKDKQHSGQTPTVLARTQQHLIDEGAIKPEEFESIFSVMRQQDILLHHPYDLFSTTVEEFINQAADDPQVMGIKMTLYRTSKDSPIIAALIRAAENGKQVMALVELKARFDEDNNIQWARQLERSGVHVVYGVLGLKTHTKIVLVVRKEQEKLRSYVHIGTGNYNSKTSKLYTDLGLLSTRPELGQDLVELFNYLTGFSKQQSFRRLLVAPVTLRKGMESLIRREIEHAREGRDGHIRAKMNSLVDPDIIALLYEAAAANVRVELIIRGMCSLYPGREGLSESISVVSIIGQFLEHSRIFWFGNGGSPEVYIGSADWMSRNLDRRVEAVTPVEDPNLRGRLERLLELYLKDNRGAWDMQSDGSFIQRQPEDGEDVRNSQVQLIKQWSQGVPQS.

N49 is an ATP binding site. Residues R398 and R428 each contribute to the Mg(2+) site. H458 functions as the Phosphohistidine intermediate in the catalytic mechanism. The ATP site is built by Y491, R587, and H615.

Belongs to the polyphosphate kinase 1 (PPK1) family. Mg(2+) is required as a cofactor. In terms of processing, an intermediate of this reaction is the autophosphorylated ppk in which a phosphate is covalently linked to a histidine residue through a N-P bond.

It carries out the reaction [phosphate](n) + ATP = [phosphate](n+1) + ADP. Its function is as follows. Catalyzes the reversible transfer of the terminal phosphate of ATP to form a long-chain polyphosphate (polyP). In Parasynechococcus marenigrum (strain WH8102), this protein is Polyphosphate kinase.